The primary structure comprises 209 residues: Pyridoxine/pyridoxamine 5'-phosphate oxidase (209 aa).

Substrate is bound by residues 7–10 (RADY) and K64. Residues 59–64 (RIVLLK), 74–75 (FT), and K81 each bind FMN. Residues Y121, R125, and S129 each contribute to the substrate site. FMN-binding positions include 138 to 139 (QS), W182, and R192.

The protein belongs to the pyridoxamine 5'-phosphate oxidase family. In terms of assembly, homodimer. Requires FMN as cofactor.

It carries out the reaction pyridoxamine 5'-phosphate + O2 + H2O = pyridoxal 5'-phosphate + H2O2 + NH4(+). It catalyses the reaction pyridoxine 5'-phosphate + O2 = pyridoxal 5'-phosphate + H2O2. It participates in cofactor metabolism; pyridoxal 5'-phosphate salvage; pyridoxal 5'-phosphate from pyridoxamine 5'-phosphate: step 1/1. Its pathway is cofactor metabolism; pyridoxal 5'-phosphate salvage; pyridoxal 5'-phosphate from pyridoxine 5'-phosphate: step 1/1. Functionally, catalyzes the oxidation of either pyridoxine 5'-phosphate (PNP) or pyridoxamine 5'-phosphate (PMP) into pyridoxal 5'-phosphate (PLP). In Haemophilus ducreyi (strain 35000HP / ATCC 700724), this protein is Pyridoxine/pyridoxamine 5'-phosphate oxidase.